Here is a 424-residue protein sequence, read N- to C-terminus: UPF0229 protein ECA2349 (424 aa).

The disordered stretch occupies residues 53–111; the sequence is SIPNADINEPMFHQGRGGHRHRVHPGNDHFVQNDKIERPQGGGGSGSGQGDASKDGEGD. The segment covering 77–90 has biased composition (basic and acidic residues); that stretch reads PGNDHFVQNDKIER. Gly residues predominate over residues 92–101; that stretch reads QGGGGSGSGQ.

It belongs to the UPF0229 family.

This chain is UPF0229 protein ECA2349, found in Pectobacterium atrosepticum (strain SCRI 1043 / ATCC BAA-672) (Erwinia carotovora subsp. atroseptica).